The chain runs to 712 residues: Frizzled-6 (712 aa).

The first 18 residues, 1 to 18 (MEMFTFLLTCVFLPFVRG), serve as a signal peptide directing secretion. Positions 19 to 132 (HSLFTCEPIT…CDRLQYCDET (114 aa)) constitute an FZ domain. Residues 19-201 (HSLFTCEPIT…SDELEFAKSF (183 aa)) are Extracellular-facing. 5 disulfides stabilise this stretch: C24–C85, C32–C78, C69–C106, C95–C129, and C99–C123. Residue N38 is glycosylated (N-linked (GlcNAc...) asparagine). Residues 202–222 (IGIVSIFCLCATLFTFLTFLI) traverse the membrane as a helical segment. Topologically, residues 223–233 (DVKRFRYPERP) are cytoplasmic. The helical transmembrane segment at 234–254 (IIYYSVCYSIVSLMYFIGFLL) threads the bilayer. Residues 255 to 284 (GDRTACNKADEKLELGDTVVLGSQNKACTV) are Extracellular-facing. A helical transmembrane segment spans residues 285 to 305 (LFMFLYFFTMAGTVWWVILTI). The Cytoplasmic segment spans residues 306–324 (TWFLAAGRKWSCEAIEQKA). A helical membrane pass occupies residues 325-345 (VWFHAVAWGIPGFLTVMLLAM). Residues 346 to 370 (NKVEGDNISGVCFVGLYDLDASRYF) are Extracellular-facing. N-linked (GlcNAc...) asparagine glycosylation occurs at N352. A helical transmembrane segment spans residues 371 to 391 (VLLPLCLCVFVGLSLLLAGII). The Cytoplasmic portion of the chain corresponds to 392 to 416 (SLNHVRQVIQHDGRNQEKLKKFMIR). Residues 417-437 (IGVFSGLYLVPLVTLLGCYVY) form a helical membrane-spanning segment. Residues 438–473 (EQVNRITWEITWVSDHCRQYHIPCPYQAKTETRPEL) lie on the Extracellular side of the membrane. Residues 474 to 494 (ALFMIKYLMTLIVGISAVFWV) traverse the membrane as a helical segment. At 495 to 712 (GSKKTCTEWA…EHGTGSHSDT (218 aa)) the chain is on the cytoplasmic side. The short motif at 498–503 (KTCTEW) is the Lys-Thr-X-X-X-Trp motif, mediates interaction with the PDZ domain of Dvl family members element. Residues 588–712 (EIQTSPETSV…EHGTGSHSDT (125 aa)) are disordered. Composition is skewed to basic and acidic residues over residues 628 to 637 (LCEEQADRKG) and 652 to 664 (TRSE…KSDV). Over residues 668–693 (GPMQSSSLQVPGSSEPGSLKGSTSLL) the composition is skewed to polar residues. Basic and acidic residues predominate over residues 700–712 (GRKEHGTGSHSDT).

The protein belongs to the G-protein coupled receptor Fz/Smo family. As to quaternary structure, interacts with LMBR1L. Ubiquitinated by ZNRF3, leading to its degradation by the proteasome.

The protein resides in the membrane. Its subcellular location is the cell membrane. It localises to the cell surface. The protein localises to the apical cell membrane. It is found in the cytoplasmic vesicle membrane. The protein resides in the endoplasmic reticulum membrane. Its function is as follows. Receptor for Wnt proteins. Most of frizzled receptors are coupled to the beta-catenin canonical signaling pathway, which leads to the activation of disheveled proteins, inhibition of GSK-3 kinase, nuclear accumulation of beta-catenin and activation of Wnt target genes. A second signaling pathway involving PKC and calcium fluxes has been seen for some family members, but it is not yet clear if it represents a distinct pathway or if it can be integrated in the canonical pathway, as PKC seems to be required for Wnt-mediated inactivation of GSK-3 kinase. Both pathways seem to involve interactions with G-proteins. Activation by Wnt5A stimulates PKC activity via a G-protein-dependent mechanism. Involved in transduction and intercellular transmission of polarity information during tissue morphogenesis and/or in differentiated tissues. Together with FZD3, is involved in the neural tube closure and plays a role in the regulation of the establishment of planar cell polarity (PCP), particularly in the orientation of asymmetric bundles of stereocilia on the apical faces of a subset of auditory and vestibular sensory cells located in the inner ear. This is Frizzled-6 (FZD6) from Canis lupus familiaris (Dog).